The following is a 268-amino-acid chain: Putative sgc region protein SgcQ (268 aa).

This sequence belongs to the BtpA family.

The sequence is that of Putative sgc region protein SgcQ (sgcQ) from Escherichia coli (strain K12).